Here is a 452-residue protein sequence, read N- to C-terminus: Pup--protein ligase (452 aa).

Position 9 (Glu9) interacts with Mg(2+). ATP is bound at residue Arg53. Tyr55 contacts Mg(2+). Asp57 functions as the Proton acceptor in the catalytic mechanism. Glu63 provides a ligand contact to Mg(2+). ATP is bound by residues Thr66 and Trp419.

This sequence belongs to the Pup ligase/Pup deamidase family. Pup-conjugating enzyme subfamily.

The enzyme catalyses ATP + [prokaryotic ubiquitin-like protein]-L-glutamate + [protein]-L-lysine = ADP + phosphate + N(6)-([prokaryotic ubiquitin-like protein]-gamma-L-glutamyl)-[protein]-L-lysine.. It functions in the pathway protein degradation; proteasomal Pup-dependent pathway. The protein operates within protein modification; protein pupylation. Catalyzes the covalent attachment of the prokaryotic ubiquitin-like protein modifier Pup to the proteasomal substrate proteins, thereby targeting them for proteasomal degradation. This tagging system is termed pupylation. The ligation reaction involves the side-chain carboxylate of the C-terminal glutamate of Pup and the side-chain amino group of a substrate lysine. This chain is Pup--protein ligase, found in Salinispora arenicola (strain CNS-205).